A 186-amino-acid polypeptide reads, in one-letter code: Ribosome maturation factor RimM (186 aa).

The 74-residue stretch at Pro93–Leu166 folds into the PRC barrel domain. A disordered region spans residues Ile160–Ala186. The segment covering Asp174 to Ala186 has biased composition (acidic residues).

This sequence belongs to the RimM family. In terms of assembly, binds ribosomal protein uS19.

It is found in the cytoplasm. Functionally, an accessory protein needed during the final step in the assembly of 30S ribosomal subunit, possibly for assembly of the head region. Essential for efficient processing of 16S rRNA. May be needed both before and after RbfA during the maturation of 16S rRNA. It has affinity for free ribosomal 30S subunits but not for 70S ribosomes. The polypeptide is Ribosome maturation factor RimM (Streptomyces avermitilis (strain ATCC 31267 / DSM 46492 / JCM 5070 / NBRC 14893 / NCIMB 12804 / NRRL 8165 / MA-4680)).